Reading from the N-terminus, the 99-residue chain is Putative septation protein SpoVG (99 aa).

The protein belongs to the SpoVG family.

Its function is as follows. Could be involved in septation. This is Putative septation protein SpoVG from Onion yellows phytoplasma (strain OY-M).